A 63-amino-acid polypeptide reads, in one-letter code: Antimicrobial peptide 2 (63 aa).

The N-terminal stretch at 1 to 27 (MAKVPIAFLKFVIVLILFIAMSGMIEA) is a signal peptide. Intrachain disulfides connect cysteine 28–cysteine 45, cysteine 35–cysteine 49, and cysteine 44–cysteine 60.

It belongs to the AMP family. As to quaternary structure, homodimer. In terms of tissue distribution, seed specific.

The protein resides in the secreted. Its function is as follows. Possesses antifungal activity and is also active on two tested Gram-positive bacteria but is non-toxic for Gram-negative bacteria and cultured human cells. This chain is Antimicrobial peptide 2 (AMP2), found in Mirabilis jalapa (Garden four-o'clock).